We begin with the raw amino-acid sequence, 336 residues long: MNEPKLISGNANLTLAKSIARRMSVHRGMAVSLVDARVERFNDQEIFVEVYENVRGEDMYVIQPTSNPANDNLMELLIIADALRRSSADRITAVIPYFGYARQDRRAKARTPISAKLVANLIVEAGIDRVLTLDLHAAQIQGFFDIPVDNLYSAPVFALDIEHHFKGQLQDLMVVSPDVGGVARAREIAKRINAPLAIVDKRREKPGEIAEMTVIGNVAGKKCIIVDDICDTAGTLCKAAEVLIENGAVEVHSYITHGVLSGPAVERVTKSVMKSLVITDSIEPSAAVRGAPNIRIVPTAPMFAQAILNIWSGTSVSSLFETDTLVPIYEGMYQRG.

ATP contacts are provided by residues 43-45 and 102-103; these read DQE and RQ. 2 residues coordinate Mg(2+): histidine 136 and aspartate 178. Lysine 201 is an active-site residue. D-ribose 5-phosphate is bound by residues arginine 203, aspartate 227, and 231–235; that span reads DTAGT.

This sequence belongs to the ribose-phosphate pyrophosphokinase family. Class I subfamily. In terms of assembly, homohexamer. Requires Mg(2+) as cofactor.

It is found in the cytoplasm. It catalyses the reaction D-ribose 5-phosphate + ATP = 5-phospho-alpha-D-ribose 1-diphosphate + AMP + H(+). The protein operates within metabolic intermediate biosynthesis; 5-phospho-alpha-D-ribose 1-diphosphate biosynthesis; 5-phospho-alpha-D-ribose 1-diphosphate from D-ribose 5-phosphate (route I): step 1/1. Functionally, involved in the biosynthesis of the central metabolite phospho-alpha-D-ribosyl-1-pyrophosphate (PRPP) via the transfer of pyrophosphoryl group from ATP to 1-hydroxyl of ribose-5-phosphate (Rib-5-P). This is Ribose-phosphate pyrophosphokinase from Cereibacter sphaeroides (strain KD131 / KCTC 12085) (Rhodobacter sphaeroides).